Here is a 271-residue protein sequence, read N- to C-terminus: Phosphonates import ATP-binding protein PhnC 2 (271 aa).

The region spanning Leu2–Ala245 is the ABC transporter domain. Gly34–Ser41 serves as a coordination point for ATP.

It belongs to the ABC transporter superfamily. Phosphonates importer (TC 3.A.1.9.1) family. In terms of assembly, the complex is composed of two ATP-binding proteins (PhnC), two transmembrane proteins (PhnE) and a solute-binding protein (PhnD).

The protein resides in the cell inner membrane. The catalysed reaction is phosphonate(out) + ATP + H2O = phosphonate(in) + ADP + phosphate + H(+). Functionally, part of the ABC transporter complex PhnCDE involved in phosphonates import. Responsible for energy coupling to the transport system. The protein is Phosphonates import ATP-binding protein PhnC 2 of Rhodopseudomonas palustris (strain BisB18).